The primary structure comprises 302 residues: UPF0725 protein At1g23960 (302 aa).

Ala-2 carries the post-translational modification N-acetylalanine.

This sequence belongs to the UPF0725 (EMB2204) family.

This chain is UPF0725 protein At1g23960, found in Arabidopsis thaliana (Mouse-ear cress).